The sequence spans 568 residues: DNA mismatch repair protein MutL (568 aa).

The protein belongs to the DNA mismatch repair MutL/HexB family.

In terms of biological role, this protein is involved in the repair of mismatches in DNA. It is required for dam-dependent methyl-directed DNA mismatch repair. May act as a 'molecular matchmaker', a protein that promotes the formation of a stable complex between two or more DNA-binding proteins in an ATP-dependent manner without itself being part of a final effector complex. This Nostoc punctiforme (strain ATCC 29133 / PCC 73102) protein is DNA mismatch repair protein MutL.